Here is a 474-residue protein sequence, read N- to C-terminus: UDP-N-acetylmuramoyl-L-alanyl-D-glutamate--2,6-diaminopimelate ligase (474 aa).

Position 21 (serine 21) interacts with UDP-N-acetyl-alpha-D-muramoyl-L-alanyl-D-glutamate. Residue 93–99 coordinates ATP; it reads GTNGKSS. Residues 139–140, serine 166, glutamine 172, and arginine 174 contribute to the UDP-N-acetyl-alpha-D-muramoyl-L-alanyl-D-glutamate site; that span reads TT. At lysine 206 the chain carries N6-carboxylysine. Meso-2,6-diaminopimelate is bound by residues arginine 367, 391–394, glycine 441, and glutamate 445; that span reads DNPR. The Meso-diaminopimelate recognition motif motif lies at 391–394; sequence DNPR.

This sequence belongs to the MurCDEF family. MurE subfamily. It depends on Mg(2+) as a cofactor. Carboxylation is probably crucial for Mg(2+) binding and, consequently, for the gamma-phosphate positioning of ATP.

It localises to the cytoplasm. It catalyses the reaction UDP-N-acetyl-alpha-D-muramoyl-L-alanyl-D-glutamate + meso-2,6-diaminopimelate + ATP = UDP-N-acetyl-alpha-D-muramoyl-L-alanyl-gamma-D-glutamyl-meso-2,6-diaminopimelate + ADP + phosphate + H(+). The protein operates within cell wall biogenesis; peptidoglycan biosynthesis. Functionally, catalyzes the addition of meso-diaminopimelic acid to the nucleotide precursor UDP-N-acetylmuramoyl-L-alanyl-D-glutamate (UMAG) in the biosynthesis of bacterial cell-wall peptidoglycan. The sequence is that of UDP-N-acetylmuramoyl-L-alanyl-D-glutamate--2,6-diaminopimelate ligase from Rickettsia bellii (strain RML369-C).